Consider the following 464-residue polypeptide: Uronate isomerase (464 aa).

It belongs to the metallo-dependent hydrolases superfamily. Uronate isomerase family.

It carries out the reaction D-glucuronate = D-fructuronate. It catalyses the reaction aldehydo-D-galacturonate = keto-D-tagaturonate. It functions in the pathway carbohydrate metabolism; pentose and glucuronate interconversion. The protein is Uronate isomerase of Caldicellulosiruptor bescii (strain ATCC BAA-1888 / DSM 6725 / KCTC 15123 / Z-1320) (Anaerocellum thermophilum).